Reading from the N-terminus, the 624-residue chain is MSGASRSLKVDGKVLEGISRGPLPASRKVYVPGVLHPDLRVPLREISQTPTRLGHGPDAKETANPPVHVYDSSGPYTDPAAELDLRQGLPALRESWILGRNDTEALSGVSSEYGRAREADPRLAGLRFAHRRSPRVAKSGANVTQLHYARKGIITPEMEYVALRENLQVEASLAAQHPGQSWGAAIPRVITPEFVRDEIARGRAIIPANINHPELEPMIIGRNFLVKINANIGNSAVTSSIEEEVEKMVWSIRWGADTVMDLSTGRNIHETREWILRNAPVPIGTVPIYQALEKVGGKAEDLTWELYRDTLIEQCEQGVDYFTIHAGVLLRYVPWTAKRLTGIVSRGGSIMAKWCLAHHRENFLYTHFEEICEIMKAYDVSFSLGDGLRPGSIADANDAAQFGELETLGELTQIAWKHDVQVMIEGPGHVPMHLIQENMTKQLAVCGEAPFYTLGPLTTDIAPGYDHFTSGIGAAMIGWFGTAMLCYVTPKEHLGLPDRDDVKEGVITYKIAAHAADLAKGHPGAQARDNALSKARFEFRWEDQFNLSLDPERARAFHDETLPAEGAKVAHFCSMCGPQFCSMKITQEVRDFAAKQGVSDDTALQSALDEKSAEFKKAGSQLYR.

Residues N231, M260, Y289, H325, 345 to 347 (SRG), 386 to 389 (DGLR), and E425 each bind substrate. H429 serves as a coordination point for Zn(2+). A substrate-binding site is contributed by Y452. H493 lines the Zn(2+) pocket. 3 residues coordinate [4Fe-4S] cluster: C573, C576, and C581.

It belongs to the ThiC family. In terms of assembly, homodimer. It depends on [4Fe-4S] cluster as a cofactor.

It carries out the reaction 5-amino-1-(5-phospho-beta-D-ribosyl)imidazole + S-adenosyl-L-methionine = 4-amino-2-methyl-5-(phosphooxymethyl)pyrimidine + CO + 5'-deoxyadenosine + formate + L-methionine + 3 H(+). It functions in the pathway cofactor biosynthesis; thiamine diphosphate biosynthesis. Catalyzes the synthesis of the hydroxymethylpyrimidine phosphate (HMP-P) moiety of thiamine from aminoimidazole ribotide (AIR) in a radical S-adenosyl-L-methionine (SAM)-dependent reaction. This is Phosphomethylpyrimidine synthase from Myxococcus xanthus (strain DK1622).